The following is a 229-amino-acid chain: Probable calcium-binding protein CML22 (229 aa).

EF-hand domains lie at glutamate 53 to serine 88, leucine 89 to leucine 124, serine 145 to proline 180, and serine 184 to leucine 219. The Ca(2+) site is built by aspartate 66, aspartate 68, asparagine 70, threonine 72, and glutamate 77.

Functionally, potential calcium sensor. The protein is Probable calcium-binding protein CML22 (CML22) of Arabidopsis thaliana (Mouse-ear cress).